Reading from the N-terminus, the 732-residue chain is uncharacterized protein (732 aa).

Disordered regions lie at residues 38-90 (TTLA…NNNK) and 226-629 (EESP…MDYQ). Over residues 47 to 56 (QQQQQQQQQQ) the composition is skewed to low complexity. Residues 57 to 76 (PPSSSTTKEGGATTTQDNKL) are compositionally biased toward polar residues. Low complexity-rich tracts occupy residues 77–89 (TANG…NNNN), 231–247 (TTTT…TTAA), and 254–318 (TTTT…GTNS). Over residues 327–338 (KAKKGVPKKAPT) the composition is skewed to basic residues. 3 stretches are compositionally biased toward low complexity: residues 339–383 (KKQP…APKT), 401–421 (KTSK…STTK), and 487–523 (SAST…IKSK). Residues 553-566 (AAAEEQEEEEEEDN) show a composition bias toward acidic residues. Low complexity-rich tracts occupy residues 567-577 (SNGIQNNNSSN) and 593-609 (DNFS…NGLL). Positions 610–621 (SEDDDDDDDDDN) are enriched in acidic residues.

This is an uncharacterized protein from Dictyostelium discoideum (Social amoeba).